A 497-amino-acid chain; its full sequence is Glycerol kinase (497 aa).

Residue Thr12 participates in ADP binding. Thr12, Thr13, and Ser14 together coordinate ATP. Thr12 is a binding site for sn-glycerol 3-phosphate. Arg16 is an ADP binding site. Residues Arg82, Glu83, Tyr132, and Asp239 each contribute to the sn-glycerol 3-phosphate site. Residues Arg82, Glu83, Tyr132, Asp239, and Gln240 each coordinate glycerol. ADP is bound by residues Thr261 and Gly303. Residues Thr261, Gly303, Gln307, and Gly402 each coordinate ATP. ADP is bound by residues Gly402 and Asn406.

It belongs to the FGGY kinase family. Homodimer.

The catalysed reaction is glycerol + ATP = sn-glycerol 3-phosphate + ADP + H(+). It participates in polyol metabolism; glycerol degradation via glycerol kinase pathway; sn-glycerol 3-phosphate from glycerol: step 1/1. Key enzyme in the regulation of glycerol uptake and metabolism. Catalyzes the phosphorylation of glycerol to yield sn-glycerol 3-phosphate. Can utilize other nucleoside triphosphates (GTP, CTP, UTP and ITP) as a phosphoryl donor. This is Glycerol kinase from Thermococcus kodakarensis (strain ATCC BAA-918 / JCM 12380 / KOD1) (Pyrococcus kodakaraensis (strain KOD1)).